The primary structure comprises 3470 residues: Mucin-4 (3470 aa).

Positions 1–28 (MRGPHWRVPWLCLSCLYSCLLLLPDALA) are cleaved as a signal peptide. The disordered stretch occupies residues 32 to 163 (TQTPMSLSSS…STESTSVDSG (132 aa)). Residues 37-57 (SLSSSTRTSQMSSQASTSSTS) are compositionally biased toward low complexity. O-linked (GalNAc...) threonine glycans are attached at residues Thr42, Thr44, Thr65, Thr68, Thr87, Thr91, Thr96, Thr97, Thr98, Thr99, Thr100, Thr103, Thr104, Thr106, Thr117, Thr130, Thr131, Thr132, Thr145, Thr146, Thr150, Thr151, Thr152, and Thr155. The tract at residues 43–2501 (RTSQMSSQAS…ETLINDFTSS (2459 aa)) is variable number of tandem repeats (VNTR). Positions 66 to 85 (EQTSTRDTPSSITTVSQSHH) are enriched in polar residues. A compositionally biased stretch (low complexity) spans 86 to 111 (TTSMETSKPQTTTTTEVTTSTPSASS). Polar residues predominate over residues 112 to 129 (RDQIQTETSSQRTISPDG). The span at 130–162 (TTTSHAPSISSSAPSTTHMLTTTSSTESTSVDS) shows a compositional bias: low complexity. Asn188 is a glycosylation site (N-linked (GlcNAc...) asparagine). Polar residues predominate over residues 199 to 220 (TLTQRQHTGSKQTSSKSQVNIV). Disordered regions lie at residues 199 to 679 (TLTQ…STVS), 691 to 925 (FPQS…NMST), 938 to 1219 (TLPQ…MSTV), 1232 to 1400 (LPQS…MSTV), 1413 to 1524 (LPQS…MSTV), 1537 to 1647 (LPKS…NMST), and 1660 to 1992 (TLPQ…TEIT). Residues 221–232 (TSTLSTSTSDST) are compositionally biased toward low complexity. The span at 233–243 (PAQTMSQVTSS) shows a compositional bias: polar residues. Residues Thr236 and Thr241 are each glycosylated (O-linked (GalNAc...) threonine). Residues 251–272 (STSGVSSTSLTTTEVLTQTSST) show a composition bias toward low complexity. The span at 273–283 (DSAPGNTTLRI) shows a compositional bias: polar residues. 2 N-linked (GlcNAc...) asparagine glycosylation sites follow: Asn278 and Asn286. Over residues 284–299 (TQNSTTHTTKVSTTST) the composition is skewed to low complexity. Residue Thr297 is glycosylated (O-linked (GalNAc...) threonine). Residues 300 to 335 (PQKLSPVSTLINSSQKMSTLPQNQHTESMDTSRQPQ) are compositionally biased toward polar residues. Asn311 is a glycosylation site (N-linked (GlcNAc...) asparagine). Residues 336-346 (TTTTIEVTTST) are compositionally biased toward low complexity. The span at 347-448 (PSASSLHQIQ…LTSSYSQHIQ (102 aa)) shows a compositional bias: polar residues. Thr357, Thr370, Thr371, Thr372, Thr385, and Thr423 each carry an O-linked (GalNAc...) threonine glycan. The span at 449-470 (SKGTSSKSQTTTNTKVNTSTPS) shows a compositional bias: low complexity. Asn465 carries N-linked (GlcNAc...) asparagine glycosylation. Over residues 479–489 (TETSSQRTNSP) the composition is skewed to polar residues. An O-linked (GalNAc...) threonine glycan is attached at Thr494. A compositionally biased stretch (low complexity) spans 496 to 510 (HAPSMSSSAPSTTHM). Polar residues predominate over residues 511 to 577 (LSTTSSNQST…SQSQHTGSKG (67 aa)). Thr513 carries an O-linked (GalNAc...) threonine glycan. N-linked (GlcNAc...) asparagine glycosylation is present at Asn517. Thr542 and Thr545 each carry an O-linked (GalNAc...) threonine glycan. Asn550 carries an N-linked (GlcNAc...) asparagine glycan. O-linked (GalNAc...) threonine glycans are attached at residues Thr551, Thr584, Thr585, Thr586, Thr587, Thr588, Thr592, Thr594, Thr599, Thr605, Thr618, Thr619, Thr620, Thr633, Thr634, Thr639, Thr640, and Thr655. Residues 578–599 (TSSNPQTTTTTEVTTSTPSATT) show a composition bias toward low complexity. Residues 600–631 (HDQIQTETSSQNTISPGETTTSYAPIMSSSAP) are compositionally biased toward polar residues. Low complexity predominate over residues 632–647 (STTHMLSTTSSTQSTS). Composition is skewed to polar residues over residues 653-679 (TTTL…STVS) and 691-701 (FPQSQHTGSKG). An N-linked (GlcNAc...) asparagine glycan is attached at Asn674. 6 O-linked (GalNAc...) threonine glycosylation sites follow: Thr702, Thr708, Thr709, Thr710, Thr711, and Thr716. Positions 702 to 723 (TSSNPQTTTTPVVTTSNPSATS) are enriched in low complexity. Asn718 carries N-linked (GlcNAc...) asparagine glycosylation. Positions 724 to 741 (RDQIQTETSSQRTISPGE) are enriched in polar residues. Over residues 742-772 (TTTSYASIMSSSAPSTTHMLTTTSSTQSTSV) the composition is skewed to low complexity. O-linked (GalNAc...) threonine glycosylation is found at Thr743, Thr744, Thr757, and Thr758. Positions 780 to 824 (VRTQGSTPATTQVSPSSQNMSTVSTPITSTQILSTLPQSQHTGSK) are enriched in polar residues. Residue Asn798 is glycosylated (N-linked (GlcNAc...) asparagine). A compositionally biased stretch (low complexity) spans 825-848 (GTSSNPQTTTSPVVTTSTPSGTSG). O-linked (GalNAc...) threonine glycans are attached at residues Thr826, Thr832, Thr833, Thr834, Thr839, Thr840, Thr842, Thr846, and Thr853. A compositionally biased stretch (polar residues) spans 849 to 879 (DQIQTETSSQRTISPGKTTTSHALNINSSAP). N-linked (GlcNAc...) asparagine glycosylation occurs at Asn875. Over residues 880 to 895 (STTHMLSTTSSTQSTS) the composition is skewed to low complexity. Thr901 and Thr902 each carry an O-linked (GalNAc...) threonine glycan. Residues 901–925 (TTAGRTQGSTPATTQVSPSSQNMST) are compositionally biased toward polar residues. Residue Asn922 is glycosylated (N-linked (GlcNAc...) asparagine). Over residues 948-968 (KSTSTNPQTTTTPEVTTSNPS) the composition is skewed to low complexity. O-linked (GalNAc...) threonine glycosylation is found at Thr950, Thr952, Thr956, Thr957, Thr958, Thr959, Thr963, and Thr964. Asn966 is a glycosylation site (N-linked (GlcNAc...) asparagine). The segment covering 969–1003 (ATSHDQIETETSSQRTISPGETTTSYAPIMSSSAP) has biased composition (polar residues). O-linked (GalNAc...) threonine glycosylation is found at Thr990, Thr991, Thr992, Thr1005, Thr1006, Thr1011, Thr1012, and Thr1015. Residues 1004 to 1019 (STTHMLSTTSSTQSTS) are compositionally biased toward low complexity. Polar residues predominate over residues 1020-1065 (VDTRNTTTLTTQGSTPATTQVSPSSKNMSTVSTPITSTHKLSTLPQ). N-linked (GlcNAc...) asparagine glycosylation occurs at Asn1024. Thr1025, Thr1026, Thr1027, Thr1029, and Thr1038 each carry an O-linked (GalNAc...) threonine glycan. Residues Asn1046, Asn1072, and Asn1091 are each glycosylated (N-linked (GlcNAc...) asparagine). Over residues 1066–1083 (SQHTGSNGTSSSSSTPAT) the composition is skewed to low complexity. Residues 1091 to 1120 (NMSTVSTPITTTHKLSTLSQSQHTGSKGTS) are compositionally biased toward polar residues. Low complexity predominate over residues 1121-1140 (SNPQTTTTPVMTTSTPSATT). Residues Thr1125, Thr1126, Thr1127, Thr1128, Thr1132, Thr1133, Thr1135, Thr1140, Thr1174, Thr1198, and Thr1207 are each glycosylated (O-linked (GalNAc...) threonine). Composition is skewed to polar residues over residues 1141 to 1219 (HDQI…MSTV) and 1232 to 1242 (LPQSQHTGSKG). The N-linked (GlcNAc...) asparagine glycan is linked to Asn1215. O-linked (GalNAc...) threonine glycans are attached at residues Thr1243, Thr1245, Thr1249, Thr1250, Thr1251, Thr1252, Thr1256, Thr1257, Thr1259, Thr1263, Thr1270, Thr1283, Thr1284, Thr1285, Thr1298, Thr1299, Thr1304, Thr1305, Thr1318, and Thr1319. Low complexity predominate over residues 1243–1264 (TSTNPQTTTTPEVTTSTPSATS). The span at 1265-1296 (RDQIQTETSSQRTISPGETTTSHAPIMSSSAP) shows a compositional bias: polar residues. Positions 1297-1312 (STTHMLSTTSSTQSTS) are enriched in low complexity. Residues 1318 to 1353 (TTAGRTQGSTPATTQVSPSSQNMTTTSHALMSSSAP) show a composition bias toward polar residues. Asn1339 is a glycosylation site (N-linked (GlcNAc...) asparagine). O-linked (GalNAc...) threonine glycans are attached at residues Thr1341, Thr1342, Thr1355, Thr1356, Thr1365, Thr1368, Thr1372, Thr1375, Thr1376, Thr1377, and Thr1379. A compositionally biased stretch (low complexity) spans 1354–1390 (STTHMLSTTSSTQSTSVDTRHTTTVTTQGSTPATTQV). Polar residues-rich tracts occupy residues 1391 to 1400 (LPSSQNMSTV) and 1413 to 1477 (LPQS…SSAP). Asn1396 carries N-linked (GlcNAc...) asparagine glycosylation. 9 O-linked (GalNAc...) threonine glycosylation sites follow: Thr1426, Thr1430, Thr1431, Thr1440, Thr1451, Thr1453, Thr1464, Thr1465, and Thr1466. An N-linked (GlcNAc...) asparagine glycan is attached at Asn1471. A compositionally biased stretch (low complexity) spans 1478–1489 (STTHMLSSTSST). O-linked (GalNAc...) threonine glycans are attached at residues Thr1479, Thr1480, Thr1499, and Thr1512. Polar residues-rich tracts occupy residues 1490-1524 (QITS…MSTV) and 1537-1553 (LPKS…SNPQ). The N-linked (GlcNAc...) asparagine glycan is linked to Asn1520. O-linked (GalNAc...) threonine glycosylation is found at Thr1554, Thr1555, Thr1557, and Thr1562. A compositionally biased stretch (low complexity) spans 1554-1569 (TTITPVVTTSTPSASS). Residues 1570–1587 (RDQIQTETSFQRTISPGE) are compositionally biased toward polar residues. O-linked (GalNAc...) threonine glycosylation is found at Thr1588, Thr1589, Thr1590, Thr1604, Thr1609, Thr1627, Thr1635, and Thr1636. Positions 1588 to 1609 (TTTSHAPSMSSSAPSSTHMLST) are enriched in low complexity. The span at 1610–1647 (ASSTQITSVDTRHTTAITTQGSTPATTQVSPSSQNMST) shows a compositional bias: polar residues. Asn1644 is a glycosylation site (N-linked (GlcNAc...) asparagine). A compositionally biased stretch (low complexity) spans 1670-1693 (KSTSTNPQTTTTPRVTTSTPSASS). O-linked (GalNAc...) threonine glycosylation is found at Thr1672, Thr1674, Thr1678, Thr1679, Thr1680, Thr1681, Thr1685, Thr1686, Thr1688, Thr1699, and Thr1714. The span at 1694–1725 (RDQIQTETSSQRTISPGKTTTSHVPNMNSSAP) shows a compositional bias: polar residues. The N-linked (GlcNAc...) asparagine glycan is linked to Asn1721. The span at 1726–1742 (STTHILSTTSSIQSTSG) shows a compositional bias: low complexity. Over residues 1747–1837 (TTAVRTQGST…SSQRTISPGE (91 aa)) the composition is skewed to polar residues. Asn1770 carries N-linked (GlcNAc...) asparagine glycosylation. Residues Thr1838, Thr1839, Thr1840, Thr1854, Thr1873, Thr1874, Thr1888, Thr1889, and Thr1891 are each glycosylated (O-linked (GalNAc...) threonine). Residues 1838–1859 (TTTSHASSLSSSAPSSTHMLST) are compositionally biased toward low complexity. A compositionally biased stretch (polar residues) spans 1860 to 1877 (ASSTEITSGDTRHTTAIV). Positions 1878–1895 (TQGSTPATTQTTLTPSSQ) are enriched in low complexity. Asn1896 is a glycosylation site (N-linked (GlcNAc...) asparagine). Residues 1896–1927 (NMSTVSTPITSTHKLSPLPQSQHTENMGTSSN) are compositionally biased toward polar residues. The segment covering 1928–1945 (PQTTTTPEVTTSTPSATS) has biased composition (low complexity). O-linked (GalNAc...) threonine glycosylation is found at Thr1930, Thr1931, Thr1932, Thr1933, Thr1937, Thr1938, Thr1940, Thr1964, Thr1965, Thr1966, and Thr1980. A compositionally biased stretch (polar residues) spans 1946–1992 (YDQIQTETSFQRTISPGETTTSHAPSMSNSAPSSTHKLSTASSTEIT). The N-linked (GlcNAc...) asparagine glycan is linked to Asn2022. Polar residues predominate over residues 2037 to 2055 (STLRQSQHTGSKGTSSNHQ). Disordered regions lie at residues 2037–2107 (STLR…NTTH), 2139–2185 (QVSL…NITP), 2205–2237 (TMSW…ILTS), and 2262–2368 (TSTS…TVPL). Residues Thr2056 and Thr2057 are each glycosylated (O-linked (GalNAc...) threonine). The span at 2056–2071 (TTTTPVVTTSTSSATS) shows a compositional bias: low complexity. Residues 2072-2089 (RDQIQTETSSLRTISPDG) are compositionally biased toward polar residues. Residues Thr2090, Thr2091, and Thr2092 are each glycosylated (O-linked (GalNAc...) threonine). Residues 2090-2107 (TTTSHASSMSSSSPNTTH) show a composition bias toward low complexity. A glycan (N-linked (GlcNAc...) asparagine) is linked at Asn2104. O-linked (GalNAc...) threonine glycosylation is found at Thr2105 and Thr2106. 3 N-linked (GlcNAc...) asparagine glycosylation sites follow: Asn2148, Asn2182, and Asn2225. Polar residues-rich tracts occupy residues 2205-2229 (TMSW…TSPA) and 2262-2303 (TSTS…QTSI). Residues Thr2264, Thr2352, Thr2354, Thr2359, and Thr2360 are each glycosylated (O-linked (GalNAc...) threonine). Residues 2344–2367 (TAVSATSSTLTSPSPTTASRSTVP) show a composition bias toward low complexity. One can recognise an NIDO domain in the interval 2458–2613 (PFWADADFSS…GLQVYRLHRE (156 aa)). In terms of domain architecture, AMOP spans 2614-2726 (ERPNYRLKCL…SFCVWYQLRR (113 aa)). A VWFD domain is found at 2738-2937 (RPAWTFGDPH…TWHVNGTGLL (200 aa)). 20 N-linked (GlcNAc...) asparagine glycosylation sites follow: Asn2755, Asn2773, Asn2801, Asn2827, Asn2844, Asn2853, Asn2888, Asn2909, Asn2916, Asn2932, Asn2958, Asn2985, Asn3003, Asn3014, Asn3054, Asn3079, Asn3102, Asn3109, Asn3157, and Asn3174. Positions 3173-3212 (PNRSCPMNYCYNNGHCDISEAPGCQPTCTCPPAFTDNRCF) constitute an EGF-like 1 domain. Cystine bridges form between Cys3177–Cys3188, Cys3182–Cys3200, and Cys3202–Cys3211. Asn3240, Asn3247, and Asn3353 each carry an N-linked (GlcNAc...) asparagine glycan. One can recognise an EGF-like 2 domain in the interval 3382–3421 (VSPCSEGYCHNGGQCKHLPDGPQCSCASFTIYSSSGEHCE). Disulfide bonds link Cys3385–Cys3396, Cys3390–Cys3405, and Cys3407–Cys3420. A helical transmembrane segment spans residues 3432–3452 (GILFGTLGALLLLGILAFMIF).

A heterodimeric complex, composed of a mucin-4 alpha chain and a cysteine-rich transmembrane mucin-4 beta chain. Mucin-4 beta chain interacts with ERBB2 via the EGF-like domain 1. In nonpolarized cells, associates with ERBB2 and ERBB3. Post-translationally, proteolytically cleaved into 2 chains, mucin-4 alpha chain and mucin-4 beta chain. Highly O-glycosylated. In terms of processing, predominantly N-glycosylated. As to expression, expressed in trachea, duodenum and intestine. Lower expression in stomach, salivary glands, liver, gallbladder, and kidney.

The protein resides in the cell membrane. The protein localises to the secreted. Functionally, membrane-bound mucin, a family of highly glycosylated proteins that constitute the major component of the mucus, the slimy and viscous secretion covering epithelial surfaces. These glycoproteins play important roles in the protection of the epithelium and are implicated in epithelial renewal and differentiation. Regulates cellular behavior through both anti-adhesive effects on cell-cell and cell-extracellular matrix interactions and its ability to act as an intramembrane ligand for ERBB2. Plays an important role in proliferation and differentiation of epithelial cells by inducing specific phosphorylation of ERBB2. In polarized epithelial cells, segregates ERBB2 and other ERBB receptors and prevents ERBB2 from acting as a coreceptor. The interaction with ERBB2 leads to enhanced expression of CDKN1B. The formation of a MUC4-ERBB2-ERBB3-NRG1 complex leads to down-regulation of CDKN1B, resulting in repression of apoptosis and stimulation of proliferation. Its ability to promote tumor growth may be mainly due to repression of apoptosis as opposed to proliferation. The protein is Mucin-4 (Muc4) of Mus musculus (Mouse).